The sequence spans 325 residues: Germination protease (325 aa).

A propeptide spanning residues 1–7 (MYNVRTD) is cleaved from the precursor.

This sequence belongs to the peptidase A25 family. In terms of assembly, homotetramer. In terms of processing, autoproteolytically processed. The inactive tetrameric zymogen termed p46 autoprocesses to a smaller form termed p41, which is active only during spore germination.

The enzyme catalyses Endopeptidase action with P4 Glu or Asp, P1 preferably Glu &gt; Asp, P1' hydrophobic and P2' Ala.. In terms of biological role, initiates the rapid degradation of small, acid-soluble proteins during spore germination. This Clostridium perfringens (strain 13 / Type A) protein is Germination protease.